We begin with the raw amino-acid sequence, 212 residues long: FMN-dependent NADH:quinone oxidoreductase 1 (212 aa).

Residues Ser-10, Ser-16–Ser-18, Met-97–Phe-100, and Ser-145–Gly-148 contribute to the FMN site.

It belongs to the azoreductase type 1 family. In terms of assembly, homodimer. It depends on FMN as a cofactor.

The enzyme catalyses 2 a quinone + NADH + H(+) = 2 a 1,4-benzosemiquinone + NAD(+). The catalysed reaction is N,N-dimethyl-1,4-phenylenediamine + anthranilate + 2 NAD(+) = 2-(4-dimethylaminophenyl)diazenylbenzoate + 2 NADH + 2 H(+). Quinone reductase that provides resistance to thiol-specific stress caused by electrophilic quinones. Its function is as follows. Also exhibits azoreductase activity. Catalyzes the reductive cleavage of the azo bond in aromatic azo compounds to the corresponding amines. The chain is FMN-dependent NADH:quinone oxidoreductase 1 from Pseudomonas fluorescens (strain Pf0-1).